The sequence spans 115 residues: Large ribosomal subunit protein bL19 (115 aa).

This sequence belongs to the bacterial ribosomal protein bL19 family.

This protein is located at the 30S-50S ribosomal subunit interface and may play a role in the structure and function of the aminoacyl-tRNA binding site. The polypeptide is Large ribosomal subunit protein bL19 (Kosmotoga olearia (strain ATCC BAA-1733 / DSM 21960 / TBF 19.5.1)).